Here is a 596-residue protein sequence, read N- to C-terminus: Chitooligosaccharidolytic beta-N-acetylglucosaminidase (596 aa).

The first 23 residues, 1 to 23 (MWLQAICIYTVFIIIGCGIPTAA), serve as a signal peptide directing secretion. N-linked (GlcNAc...) asparagine glycans are attached at residues asparagine 166, asparagine 264, and asparagine 377.

It belongs to the glycosyl hydrolase 20 family.

It carries out the reaction Hydrolysis of terminal non-reducing N-acetyl-D-hexosamine residues in N-acetyl-beta-D-hexosaminides.. In terms of biological role, active during metamorphosis to degrade chitin. This Bombyx mori (Silk moth) protein is Chitooligosaccharidolytic beta-N-acetylglucosaminidase.